Reading from the N-terminus, the 991-residue chain is KAT8 regulatory NSL complex subunit 1-like protein (991 aa).

K136 is covalently cross-linked (Glycyl lysine isopeptide (Lys-Gly) (interchain with G-Cter in SUMO2)). Positions 443–462 (VNSQVPQRSEEPLPEHDFEM) are disordered. A compositionally biased stretch (basic and acidic residues) spans 450–461 (RSEEPLPEHDFE). S463 carries the post-translational modification Phosphoserine. Residues 749-763 (ANVTSRTQNPSSQNT) show a composition bias toward polar residues. The disordered stretch occupies residues 749-770 (ANVTSRTQNPSSQNTSRRRLRS). The PEHE domain occupies 798-919 (EILTPRWRKV…DGQEDKSLRW (122 aa)). K863 carries the N6-acetyllysine modification.

Post-translationally, acetylated on lysine residues by KAT8 upon ionizing radiation-induced DNA damage; deacetylated by HDAC3.

This chain is KAT8 regulatory NSL complex subunit 1-like protein (Kansl1l), found in Mus musculus (Mouse).